The sequence spans 280 residues: 2-dehydro-3-deoxyphosphooctonate aldolase (280 aa).

The protein belongs to the KdsA family.

Its subcellular location is the cytoplasm. The enzyme catalyses D-arabinose 5-phosphate + phosphoenolpyruvate + H2O = 3-deoxy-alpha-D-manno-2-octulosonate-8-phosphate + phosphate. It functions in the pathway carbohydrate biosynthesis; 3-deoxy-D-manno-octulosonate biosynthesis; 3-deoxy-D-manno-octulosonate from D-ribulose 5-phosphate: step 2/3. Its pathway is bacterial outer membrane biogenesis; lipopolysaccharide biosynthesis. The protein is 2-dehydro-3-deoxyphosphooctonate aldolase of Neisseria meningitidis serogroup A / serotype 4A (strain DSM 15465 / Z2491).